Here is a 326-residue protein sequence, read N- to C-terminus: Light-induced protein, chloroplastic (326 aa).

Residues Met-1–Gln-63 constitute a chloroplast transit peptide.

Belongs to the LIPC family. As to quaternary structure, associates with the major light-harvesting antenna complex polypeptides of the PSII oxygen-evolving complex. As to expression, expressed in leaves.

The protein resides in the plastid. Its subcellular location is the chloroplast thylakoid membrane. Functionally, required for normal plant growth. May be both photoprotective and play an ancillary role in photosynthesis. May structurally stabilize thylakoids during osmotic and oxidative stress. This chain is Light-induced protein, chloroplastic, found in Solanum tuberosum (Potato).